The following is a 607-amino-acid chain: Elongation factor 4 (607 aa).

A tr-type G domain is found at 11-193; it reads KSIRNFSIIA…QIVAKVPAPT (183 aa). GTP contacts are provided by residues 23 to 28 and 140 to 143; these read DHGKST and NKID.

Belongs to the TRAFAC class translation factor GTPase superfamily. Classic translation factor GTPase family. LepA subfamily.

It is found in the cell membrane. The catalysed reaction is GTP + H2O = GDP + phosphate + H(+). In terms of biological role, required for accurate and efficient protein synthesis under certain stress conditions. May act as a fidelity factor of the translation reaction, by catalyzing a one-codon backward translocation of tRNAs on improperly translocated ribosomes. Back-translocation proceeds from a post-translocation (POST) complex to a pre-translocation (PRE) complex, thus giving elongation factor G a second chance to translocate the tRNAs correctly. Binds to ribosomes in a GTP-dependent manner. This Exiguobacterium sibiricum (strain DSM 17290 / CCUG 55495 / CIP 109462 / JCM 13490 / 255-15) protein is Elongation factor 4.